Here is a 428-residue protein sequence, read N- to C-terminus: Elongation factor 1-alpha (428 aa).

Positions 5-217 (KPHVNIVFIG…DQIPEPEKPI (213 aa)) constitute a tr-type G domain. The G1 stretch occupies residues 14 to 21 (GHVDHGKS). 14-21 (GHVDHGKS) contacts GTP. A Mg(2+)-binding site is contributed by S21. A G2 region spans residues 68 to 72 (GITID). Residues 89–92 (DAPG) form a G3 region. GTP-binding positions include 89-93 (DAPGH) and 144-147 (NKMD). The tract at residues 144-147 (NKMD) is G4. Residues 181–183 (SAW) form a G5 region.

It belongs to the TRAFAC class translation factor GTPase superfamily. Classic translation factor GTPase family. EF-Tu/EF-1A subfamily.

It is found in the cytoplasm. The catalysed reaction is GTP + H2O = GDP + phosphate + H(+). Functionally, GTP hydrolase that promotes the GTP-dependent binding of aminoacyl-tRNA to the A-site of ribosomes during protein biosynthesis. This chain is Elongation factor 1-alpha, found in Pyrococcus horikoshii (strain ATCC 700860 / DSM 12428 / JCM 9974 / NBRC 100139 / OT-3).